Here is a 369-residue protein sequence, read N- to C-terminus: Sesquiterpene cyclase hepA (369 aa).

D100, N248, S252, and D256 together coordinate Mg(2+). Positions D100–D104 match the DDXXD motif motif. The short motif at N255–K262 is the (N,D)D(L,I,V)X(S,T)XXXE motif element.

The protein belongs to the terpene synthase family. Requires Mg(2+) as cofactor.

Sesquiterpene cyclase; part of the gene cluster that mediates the biosynthesis of heptelidic acid (HA), a sesquiterpene lactone that acts as an inhibitor of glyceraldehyde-3-phosphatedehydrogenase (GAPDH) and a growth inhibitor of the salt-tolerant lactic acid bacteria in soy sauce brewing. This chain is Sesquiterpene cyclase hepA, found in Aspergillus oryzae (strain ATCC 42149 / RIB 40) (Yellow koji mold).